The following is a 39-amino-acid chain: Photosystem II reaction center protein J (39 aa).

Residues 9 to 29 (LWLVATVGGIAAITVLGIFIY) traverse the membrane as a helical segment.

Belongs to the PsbJ family. As to quaternary structure, PSII is composed of 1 copy each of membrane proteins PsbA, PsbB, PsbC, PsbD, PsbE, PsbF, PsbH, PsbI, PsbJ, PsbK, PsbL, PsbM, PsbT, PsbX, PsbY, PsbZ, Psb30/Ycf12, at least 3 peripheral proteins of the oxygen-evolving complex and a large number of cofactors. It forms dimeric complexes.

The protein localises to the plastid. It is found in the chloroplast thylakoid membrane. In terms of biological role, one of the components of the core complex of photosystem II (PSII). PSII is a light-driven water:plastoquinone oxidoreductase that uses light energy to abstract electrons from H(2)O, generating O(2) and a proton gradient subsequently used for ATP formation. It consists of a core antenna complex that captures photons, and an electron transfer chain that converts photonic excitation into a charge separation. This Pyropia yezoensis (Susabi-nori) protein is Photosystem II reaction center protein J.